Consider the following 232-residue polypeptide: Acetate--CoA ligase [ADP-forming] I subunit beta (232 aa).

The 37-residue stretch at 27 to 63 (KEILKLYGIPVPEFKVARNEEEAVKFSGEIGYPVVMK) folds into the ATP-grasp domain. 53–64 (SGEIGYPVVMKI) lines the ATP pocket.

The protein belongs to the acetate CoA ligase beta subunit family. In terms of assembly, heterotetramer of two alpha and two beta subunits.

The protein localises to the cytoplasm. The catalysed reaction is acetate + ATP + CoA = acetyl-CoA + ADP + phosphate. Activity is dependent on magnesium. In terms of biological role, catalyzes the reversible formation of acetate and ATP from acetyl-CoA by using ADP and phosphate. Can use other substrates such as isobutyryl-CoA, propionyl-CoA and butyryl-CoA, but not indoleacetyl-CoA, phenylacetyl-CoA or succinyl-CoA. Seems to be involved primarily in the conversion of acetyl-CoA to acetate. Participates in the degradation of branched-chain amino acids via branched-chain-acyl-CoA esters. In Pyrococcus furiosus (strain ATCC 43587 / DSM 3638 / JCM 8422 / Vc1), this protein is Acetate--CoA ligase [ADP-forming] I subunit beta.